A 520-amino-acid polypeptide reads, in one-letter code: GMP synthase [glutamine-hydrolyzing] (520 aa).

In terms of domain architecture, Glutamine amidotransferase type-1 spans 12 to 205; it reads KIIVLDYGSQ…AISICGARGD (194 aa). Cys-89 acts as the Nucleophile in catalysis. Catalysis depends on residues His-179 and Glu-181. The 190-residue stretch at 206 to 395 folds into the GMPS ATP-PPase domain; sequence WSMDNFIDME…LGMPEEIVWR (190 aa). 233 to 239 provides a ligand contact to ATP; it reads SGGVDSS.

As to quaternary structure, homodimer.

It carries out the reaction XMP + L-glutamine + ATP + H2O = GMP + L-glutamate + AMP + diphosphate + 2 H(+). It functions in the pathway purine metabolism; GMP biosynthesis; GMP from XMP (L-Gln route): step 1/1. Functionally, catalyzes the synthesis of GMP from XMP. This Streptococcus pyogenes serotype M1 protein is GMP synthase [glutamine-hydrolyzing].